Reading from the N-terminus, the 717-residue chain is Fatty acid oxidation complex subunit alpha (717 aa).

An enoyl-CoA hydratase/isomerase region spans residues 1 to 190 (MIHAGNAITV…KDGAVDAVVS (190 aa)). Aspartate 298 contributes to the substrate binding site. The interval 313 to 717 (HPVNQAAVLG…MAENNKKFYG (405 aa)) is 3-hydroxyacyl-CoA dehydrogenase. NAD(+) is bound by residues methionine 326, aspartate 345, 402 to 404 (VTE), lysine 409, and serine 431. Histidine 452 functions as the For 3-hydroxyacyl-CoA dehydrogenase activity in the catalytic mechanism. Asparagine 455 serves as a coordination point for NAD(+). Asparagine 502 contacts substrate.

This sequence in the N-terminal section; belongs to the enoyl-CoA hydratase/isomerase family. The protein in the C-terminal section; belongs to the 3-hydroxyacyl-CoA dehydrogenase family. Heterotetramer of two alpha chains (FadB) and two beta chains (FadA).

It catalyses the reaction a (3S)-3-hydroxyacyl-CoA + NAD(+) = a 3-oxoacyl-CoA + NADH + H(+). The enzyme catalyses a (3S)-3-hydroxyacyl-CoA = a (2E)-enoyl-CoA + H2O. The catalysed reaction is a 4-saturated-(3S)-3-hydroxyacyl-CoA = a (3E)-enoyl-CoA + H2O. It carries out the reaction (3S)-3-hydroxybutanoyl-CoA = (3R)-3-hydroxybutanoyl-CoA. It catalyses the reaction a (3Z)-enoyl-CoA = a 4-saturated (2E)-enoyl-CoA. The enzyme catalyses a (3E)-enoyl-CoA = a 4-saturated (2E)-enoyl-CoA. The protein operates within lipid metabolism; fatty acid beta-oxidation. Involved in the aerobic and anaerobic degradation of long-chain fatty acids via beta-oxidation cycle. Catalyzes the formation of 3-oxoacyl-CoA from enoyl-CoA via L-3-hydroxyacyl-CoA. It can also use D-3-hydroxyacyl-CoA and cis-3-enoyl-CoA as substrate. The protein is Fatty acid oxidation complex subunit alpha of Acinetobacter baylyi (strain ATCC 33305 / BD413 / ADP1).